Reading from the N-terminus, the 292-residue chain is 1D-myo-inositol 2-acetamido-2-deoxy-alpha-D-glucopyranoside deacetylase (292 aa).

Zn(2+)-binding residues include H11, D14, and H146.

Belongs to the MshB deacetylase family. Requires Zn(2+) as cofactor.

The enzyme catalyses 1D-myo-inositol 2-acetamido-2-deoxy-alpha-D-glucopyranoside + H2O = 1D-myo-inositol 2-amino-2-deoxy-alpha-D-glucopyranoside + acetate. Functionally, catalyzes the deacetylation of 1D-myo-inositol 2-acetamido-2-deoxy-alpha-D-glucopyranoside (GlcNAc-Ins) in the mycothiol biosynthesis pathway. The polypeptide is 1D-myo-inositol 2-acetamido-2-deoxy-alpha-D-glucopyranoside deacetylase (Acidothermus cellulolyticus (strain ATCC 43068 / DSM 8971 / 11B)).